The following is a 200-amino-acid chain: UPF0316 protein Mhun_0543 (200 aa).

Transmembrane regions (helical) follow at residues 3–23, 44–64, and 71–91; these read VGFL…IFLA, FIAP…IGQV, and PICY…GMEL.

The protein belongs to the UPF0316 family.

It localises to the cell membrane. In Methanospirillum hungatei JF-1 (strain ATCC 27890 / DSM 864 / NBRC 100397 / JF-1), this protein is UPF0316 protein Mhun_0543.